The primary structure comprises 500 residues: Protein DETOXIFICATION 29 (500 aa).

A run of 12 helical transmembrane segments spans residues 67–87 (GAIT…AVSV), 91–111 (VVAG…ETLC), 132–152 (VILN…APIL), 161–181 (ISSA…AYAI), 197–217 (VMAV…WFVI), 227–247 (LAVV…VYIF), 277–297 (AVML…AGYL), 302–322 (ISVA…MIAI), 349–369 (LVAV…LLIF), 393–413 (ILAL…VAVG), 419–439 (VVAY…GLLL), and 449–469 (GIWC…TWMI).

This sequence belongs to the multi antimicrobial extrusion (MATE) (TC 2.A.66.1) family.

The protein resides in the vacuole membrane. The chain is Protein DETOXIFICATION 29 from Arabidopsis thaliana (Mouse-ear cress).